The primary structure comprises 192 residues: Imidazoleglycerol-phosphate dehydratase (192 aa).

This sequence belongs to the imidazoleglycerol-phosphate dehydratase family.

The protein localises to the cytoplasm. It carries out the reaction D-erythro-1-(imidazol-4-yl)glycerol 3-phosphate = 3-(imidazol-4-yl)-2-oxopropyl phosphate + H2O. It functions in the pathway amino-acid biosynthesis; L-histidine biosynthesis; L-histidine from 5-phospho-alpha-D-ribose 1-diphosphate: step 6/9. The protein is Imidazoleglycerol-phosphate dehydratase of Caldivirga maquilingensis (strain ATCC 700844 / DSM 13496 / JCM 10307 / IC-167).